A 273-amino-acid chain; its full sequence is Large ribosomal subunit protein uL2 (273 aa).

Residues 222–273 (GMAMNPVDHPHGGGEGRNKGIQPVSPWGTPAKGYRTRSNKRTDKYIVRRRNK) are disordered. Residues 229 to 239 (DHPHGGGEGRN) are compositionally biased toward basic and acidic residues.

It belongs to the universal ribosomal protein uL2 family. Part of the 50S ribosomal subunit. Forms a bridge to the 30S subunit in the 70S ribosome.

In terms of biological role, one of the primary rRNA binding proteins. Required for association of the 30S and 50S subunits to form the 70S ribosome, for tRNA binding and peptide bond formation. It has been suggested to have peptidyltransferase activity; this is somewhat controversial. Makes several contacts with the 16S rRNA in the 70S ribosome. This is Large ribosomal subunit protein uL2 from Tolumonas auensis (strain DSM 9187 / NBRC 110442 / TA 4).